The chain runs to 309 residues: Beta-lactamase (309 aa).

The N-terminal stretch at 1–28 (MMILKNKRMLKIGICVGILGLSITSLEA) is a signal peptide. S92 serves as the catalytic Acyl-ester intermediate. E188 serves as the catalytic Proton acceptor. 254-256 (KSG) is a binding site for substrate.

The protein belongs to the class-A beta-lactamase family.

It carries out the reaction a beta-lactam + H2O = a substituted beta-amino acid. Functionally, this protein is a beta-lactamase with a substrate specificity for penicillins. This Bacillus thuringiensis protein is Beta-lactamase (bla).